A 516-amino-acid polypeptide reads, in one-letter code: 2,3-bisphosphoglycerate-independent phosphoglycerate mutase (516 aa).

2 residues coordinate Mn(2+): Asp-15 and Ser-65. Ser-65 (phosphoserine intermediate) is an active-site residue. Substrate is bound by residues His-126, 156-157 (RD), Arg-188, Arg-194, 263-266 (RADR), and Lys-336. Residues Asp-403, His-407, Asp-444, His-445, and His-463 each contribute to the Mn(2+) site.

Belongs to the BPG-independent phosphoglycerate mutase family. In terms of assembly, monomer. The cofactor is Mn(2+).

It carries out the reaction (2R)-2-phosphoglycerate = (2R)-3-phosphoglycerate. The protein operates within carbohydrate degradation; glycolysis; pyruvate from D-glyceraldehyde 3-phosphate: step 3/5. Its function is as follows. Catalyzes the interconversion of 2-phosphoglycerate and 3-phosphoglycerate. This chain is 2,3-bisphosphoglycerate-independent phosphoglycerate mutase, found in Francisella tularensis subsp. holarctica (strain OSU18).